A 711-amino-acid chain; its full sequence is Acyl-CoA dehydrogenase FadE34 (711 aa).

It belongs to the acyl-CoA dehydrogenase family. Homodimer. FAD serves as cofactor.

It carries out the reaction 3-oxochol-4-en-24-oyl-CoA + A = (22E)-3-oxochola-4,22-dien-24-oyl-CoA + AH2. It catalyses the reaction 3beta-hydroxy-chol-5-ene-24-oyl-CoA + A = 3beta-hydroxy-chol-5,22-dien-24-oyl-CoA + AH2. It functions in the pathway steroid metabolism; cholesterol degradation. Functionally, involved in the second cycle of side chain dehydrogenation in the beta-oxidation of cholesterol catabolism. It contributes partly to the virulence by increasing the efficiency of beta-oxidation. Catalyzes the dehydrogenation of the five-carbon steroid side chain of 3-oxo-chol-4-en-24-oyl-CoA (3-OCO-CoA) to yield 3-oxochol-4,22-dien-24-oyl-CoA. Can also use 3beta-hydroxy-chol-5-ene-24-oyl-CoA, and shows weak activity with cholyl-CoA and deoxycholyl-CoA. This is Acyl-CoA dehydrogenase FadE34 (fadE34) from Mycobacterium tuberculosis (strain ATCC 25618 / H37Rv).